The primary structure comprises 502 residues: Lysine--tRNA ligase (502 aa).

Positions 403 and 410 each coordinate Mg(2+).

Belongs to the class-II aminoacyl-tRNA synthetase family. Homodimer. Requires Mg(2+) as cofactor.

Its subcellular location is the cytoplasm. The catalysed reaction is tRNA(Lys) + L-lysine + ATP = L-lysyl-tRNA(Lys) + AMP + diphosphate. The polypeptide is Lysine--tRNA ligase (Synechococcus sp. (strain CC9902)).